The primary structure comprises 54 residues: UPF0391 membrane protein Bpet1858 (54 aa).

The next 2 helical transmembrane spans lie at 5–25 (AVVF…GIAA) and 27–47 (AAGI…LSIL).

It belongs to the UPF0391 family.

The protein localises to the cell membrane. This is UPF0391 membrane protein Bpet1858 from Bordetella petrii (strain ATCC BAA-461 / DSM 12804 / CCUG 43448).